The chain runs to 142 residues: MFQGASSLNLDGKGRLSVPTRHRDALVAMAQGQVTLTKHPHGCLMLFPRTEWLQFRERIAQLPMSAQWWKRIFLGNAMDVDMDATGRVLVSPELREAVGLTKEVVLLGMGNHFELWDKATYEAHEAKAMQEEMPAAFQDFAF.

SpoVT-AbrB domains follow at residues 5–51 (ASSL…PRTE) and 77–120 (AMDV…DKAT).

The protein belongs to the MraZ family. As to quaternary structure, forms oligomers.

It localises to the cytoplasm. Its subcellular location is the nucleoid. The polypeptide is Transcriptional regulator MraZ (Delftia acidovorans (strain DSM 14801 / SPH-1)).